The chain runs to 415 residues: CCA-adding enzyme (415 aa).

Residues serine 52 and arginine 55 each contribute to the ATP site. CTP contacts are provided by serine 52 and arginine 55. Aspartate 64, aspartate 66, and aspartate 116 together coordinate Mg(2+). Residues histidine 139, lysine 159, and tyrosine 168 each contribute to the ATP site. Residues histidine 139, lysine 159, and tyrosine 168 each coordinate CTP.

It belongs to the tRNA nucleotidyltransferase/poly(A) polymerase family. Archaeal CCA-adding enzyme subfamily. Homodimer. It depends on Mg(2+) as a cofactor.

It carries out the reaction a tRNA precursor + 2 CTP + ATP = a tRNA with a 3' CCA end + 3 diphosphate. The enzyme catalyses a tRNA with a 3' CCA end + 2 CTP + ATP = a tRNA with a 3' CCACCA end + 3 diphosphate. In terms of biological role, catalyzes the addition and repair of the essential 3'-terminal CCA sequence in tRNAs without using a nucleic acid template. Adds these three nucleotides in the order of C, C, and A to the tRNA nucleotide-73, using CTP and ATP as substrates and producing inorganic pyrophosphate. tRNA 3'-terminal CCA addition is required both for tRNA processing and repair. Also involved in tRNA surveillance by mediating tandem CCA addition to generate a CCACCA at the 3' terminus of unstable tRNAs. While stable tRNAs receive only 3'-terminal CCA, unstable tRNAs are marked with CCACCA and rapidly degraded. The polypeptide is CCA-adding enzyme (Pyrobaculum neutrophilum (strain DSM 2338 / JCM 9278 / NBRC 100436 / V24Sta) (Thermoproteus neutrophilus)).